The primary structure comprises 397 residues: Succinate--CoA ligase [ADP-forming] subunit beta (397 aa).

The region spanning 9–254 is the ATP-grasp domain; that stretch reads KALLKGYGAP…ETEEDAKEIE (246 aa). ATP is bound by residues Lys46, 53-55, Glu109, Ala112, and Glu117; that span reads GRG. Mg(2+)-binding residues include Asn209 and Asp223. Residues Asn274 and 331–333 each bind substrate; that span reads GIM.

Belongs to the succinate/malate CoA ligase beta subunit family. Heterotetramer of two alpha and two beta subunits. The cofactor is Mg(2+).

The enzyme catalyses succinate + ATP + CoA = succinyl-CoA + ADP + phosphate. The catalysed reaction is GTP + succinate + CoA = succinyl-CoA + GDP + phosphate. The protein operates within carbohydrate metabolism; tricarboxylic acid cycle; succinate from succinyl-CoA (ligase route): step 1/1. Functionally, succinyl-CoA synthetase functions in the citric acid cycle (TCA), coupling the hydrolysis of succinyl-CoA to the synthesis of either ATP or GTP and thus represents the only step of substrate-level phosphorylation in the TCA. The beta subunit provides nucleotide specificity of the enzyme and binds the substrate succinate, while the binding sites for coenzyme A and phosphate are found in the alpha subunit. The chain is Succinate--CoA ligase [ADP-forming] subunit beta from Rhizobium leguminosarum bv. trifolii (strain WSM2304).